Reading from the N-terminus, the 283-residue chain is Elongation factor Ts (283 aa).

Residues 79–82 form an involved in Mg(2+) ion dislocation from EF-Tu region; that stretch reads TDFV.

The protein belongs to the EF-Ts family.

The protein localises to the cytoplasm. In terms of biological role, associates with the EF-Tu.GDP complex and induces the exchange of GDP to GTP. It remains bound to the aminoacyl-tRNA.EF-Tu.GTP complex up to the GTP hydrolysis stage on the ribosome. This chain is Elongation factor Ts, found in Shewanella putrefaciens (strain CN-32 / ATCC BAA-453).